Here is a 443-residue protein sequence, read N- to C-terminus: ATP-dependent protease ATPase subunit HslU (443 aa).

Residues isoleucine 18 and 60–65 (GVGKTE) each bind ATP. A disordered region spans residues 139–161 (ARDSGFDANPSEENNATRQKFRK). ATP contacts are provided by aspartate 256, glutamate 321, and arginine 393.

Belongs to the ClpX chaperone family. HslU subfamily. In terms of assembly, a double ring-shaped homohexamer of HslV is capped on each side by a ring-shaped HslU homohexamer. The assembly of the HslU/HslV complex is dependent on binding of ATP.

It is found in the cytoplasm. Functionally, ATPase subunit of a proteasome-like degradation complex; this subunit has chaperone activity. The binding of ATP and its subsequent hydrolysis by HslU are essential for unfolding of protein substrates subsequently hydrolyzed by HslV. HslU recognizes the N-terminal part of its protein substrates and unfolds these before they are guided to HslV for hydrolysis. This Nitrosomonas eutropha (strain DSM 101675 / C91 / Nm57) protein is ATP-dependent protease ATPase subunit HslU.